The primary structure comprises 685 residues: Sodium-dependent phosphate transporter 1 (685 aa).

Transmembrane regions (helical) follow at residues 25 to 45 (FLWMLVLGFVIAFVLAFSVGA), 66 to 86 (ACILASIFETVGSVLLGAKVS), 106 to 126 (LMAGSISAMFGSAVWQLAASF), 162 to 182 (IVLSWFISPLLSGIMSALLFY), 201 to 221 (ALPIFYACTIGVNLFSIMYSG), and 234 to 254 (GIILISVGCAVLCALVVWFFV). Residues 482-492 (VEAEEQEEGSI) show a composition bias toward acidic residues. Positions 482 to 513 (VEAEEQEEGSIEDVATDRKSSSSSLEERHDQD) are disordered. Residues 496–513 (ATDRKSSSSSLEERHDQD) are compositionally biased toward basic and acidic residues. The next 4 membrane-spanning stretches (helical) occupy residues 517–537 (VSLLFQFLQILTACFGSFAHG), 565–585 (ATPIWLLLYGGVGICIGLWVW), 606–626 (FSIELASALTVVIASNVGLPI), and 656–676 (IFLAWFVTVPISGLISAAIMA).

It belongs to the inorganic phosphate transporter (PiT) (TC 2.A.20) family.

The protein resides in the cell membrane. It catalyses the reaction 2 Na(+)(out) + phosphate(out) = 2 Na(+)(in) + phosphate(in). Its function is as follows. Sodium-phosphate symporter which preferentially transports the monovalent form of phosphate with a stoichiometry of two sodium ions per phosphate ion. The sequence is that of Sodium-dependent phosphate transporter 1 (slc20a1) from Xenopus tropicalis (Western clawed frog).